The sequence spans 128 residues: Large ribosomal subunit protein uL22 (128 aa).

It belongs to the universal ribosomal protein uL22 family. In terms of assembly, part of the 50S ribosomal subunit.

In terms of biological role, this protein binds specifically to 23S rRNA; its binding is stimulated by other ribosomal proteins, e.g. L4, L17, and L20. It is important during the early stages of 50S assembly. It makes multiple contacts with different domains of the 23S rRNA in the assembled 50S subunit and ribosome. Functionally, the globular domain of the protein is located near the polypeptide exit tunnel on the outside of the subunit, while an extended beta-hairpin is found that lines the wall of the exit tunnel in the center of the 70S ribosome. This chain is Large ribosomal subunit protein uL22, found in Rhodopseudomonas palustris (strain BisA53).